The sequence spans 257 residues: DNA repair protein RecO (257 aa).

This sequence belongs to the RecO family.

Functionally, involved in DNA repair and RecF pathway recombination. The chain is DNA repair protein RecO from Streptococcus sanguinis (strain SK36).